The chain runs to 259 residues: Probable ABC transporter permease protein RC0129 (259 aa).

Helical transmembrane passes span 13 to 35 (TVKF…SSII), 49 to 69 (LFIG…SGAV), 148 to 168 (VITA…IGVM), 195 to 215 (PIDV…ISII), and 237 to 257 (AVVN…ELFF).

It belongs to the MlaE permease family.

Its subcellular location is the cell inner membrane. Functionally, could be part of an ABC transporter complex. The polypeptide is Probable ABC transporter permease protein RC0129 (Rickettsia conorii (strain ATCC VR-613 / Malish 7)).